Reading from the N-terminus, the 95-residue chain is Large ribosomal subunit protein bL31 (95 aa).

The tract at residues 68–95 (AGLNNINKKPEKKKIQGKSEPRKSLNEL) is disordered. Basic and acidic residues predominate over residues 80-95 (KKIQGKSEPRKSLNEL).

This sequence belongs to the bacterial ribosomal protein bL31 family. Type A subfamily. As to quaternary structure, part of the 50S ribosomal subunit.

In terms of biological role, binds the 23S rRNA. In Ureaplasma parvum serovar 3 (strain ATCC 700970), this protein is Large ribosomal subunit protein bL31.